The following is a 482-amino-acid chain: Zinc finger protein 385B (482 aa).

The segment at 1–105 (MNMATFLRGF…TGSACHTTTL (105 aa)) is required for induction of apoptosis. 2 Matrin-type zinc fingers span residues 34–64 (SFCE…RVKQ) and 169–199 (ISCN…KVKA). 3 disordered regions span residues 54–75 (DGKS…PPVQ), 189–259 (KGSK…SFLL), and 268–287 (LGAI…SVAE). An interaction with p53/TP53 region spans residues 106–482 (PALVRTPTLM…TPASILFAPY (377 aa)). Basic and acidic residues predominate over residues 231–240 (SSDKSEDKGK). Residues 294–328 (KKLLYCSLCKVAVNSLSQLEAHNTGSKHKTMVEAR) form a Matrin-type 3 zinc finger. Disordered regions lie at residues 331 to 352 (AGPI…GSKG) and 378 to 397 (HISS…KPKY). The segment at 360 to 390 (FHCEICDVHVNSEIQLKQHISSRRHKDRVAG) adopts a Matrin-type 4 zinc-finger fold.

As to quaternary structure, interacts with p53/TP53; the interaction is direct.

It localises to the nucleus. May play a role in p53/TP53-mediated apoptosis. In Mus musculus (Mouse), this protein is Zinc finger protein 385B (Znf385b).